Here is a 272-residue protein sequence, read N- to C-terminus: Proteasome subunit beta type-5 (272 aa).

Positions 1–62 (MINIDFDNIE…APKALEFAHG (62 aa)) are cleaved as a propeptide — removed in mature form. The active-site Nucleophile is the T63.

Belongs to the peptidase T1B family. In terms of assembly, the 26S proteasome consists of a 20S proteasome core and two 19S regulatory subunits. The 20S proteasome core is composed of 28 subunits that are arranged in four stacked rings, resulting in a barrel-shaped structure. The two end rings are each formed by seven alpha subunits, and the two central rings are each formed by seven beta subunits. The catalytic chamber with the active sites is on the inside of the barrel.

It is found in the cytoplasm. The protein resides in the nucleus. The catalysed reaction is Cleavage of peptide bonds with very broad specificity.. The proteasome is a multicatalytic proteinase complex which is characterized by its ability to cleave peptides with Arg, Phe, Tyr, Leu, and Glu adjacent to the leaving group at neutral or slightly basic pH. The proteasome has an ATP-dependent proteolytic activity. This is Proteasome subunit beta type-5 (psmB5) from Dictyostelium discoideum (Social amoeba).